Here is a 380-residue protein sequence, read N- to C-terminus: Cytochrome b (380 aa).

4 helical membrane-spanning segments follow: residues 33 to 53 (FGSLLGLCLLTQILTGLFLAM), 77 to 98 (WLIRNFHANGASFFFICLYLHI), 113 to 133 (WNVGVVLFLLVMMTAFVGYVL), and 178 to 198 (FFAFHFLFPFIIAAMTILHFL). Residues H83 and H97 each contribute to the heme b site. Heme b is bound by residues H182 and H196. H201 serves as a coordination point for a ubiquinone. 4 helical membrane-spanning segments follow: residues 226 to 246 (YKDLLGFVVMLLALSTLSLFS), 288 to 308 (LGGVLALLSSILILMLVPILH), 320 to 340 (LTQILFWVLVADVAILTWIGG), and 347 to 367 (FIIVGQVASVLYFALFLVIMP).

The protein belongs to the cytochrome b family. In terms of assembly, the cytochrome bc1 complex contains 3 respiratory subunits (MT-CYB, CYC1 and UQCRFS1), 2 core proteins (UQCRC1 and UQCRC2) and probably 6 low-molecular weight proteins. Requires heme b as cofactor.

It is found in the mitochondrion inner membrane. Component of the ubiquinol-cytochrome c reductase complex (complex III or cytochrome b-c1 complex) that is part of the mitochondrial respiratory chain. The b-c1 complex mediates electron transfer from ubiquinol to cytochrome c. Contributes to the generation of a proton gradient across the mitochondrial membrane that is then used for ATP synthesis. The chain is Cytochrome b (mt-cyb) from Zeus faber (John Dory).